Consider the following 480-residue polypeptide: MSVVTRIAPSPTGDPHVGTAYIGLFNHTLAQQARARGEEGKFILRIEDTDRNRYVPDSERRIFQMMAWLGLTPDESPLQGGPNGPYRQSERTAIYGEYARKLVEAGHAYYAFETPEELAALREAAQQEGRVIAVPSRDLDPAEAQRRVDAGESAVIRLKVPREGETVVNDALRKPIAFQNREIDDKVLLKADGYPTYHLANVVDDHLMGVTHVIRAEEWITSTPIHVLLYRAFGWAEPIFAHMPLLRNADKSKISKRKNPTSVEWYMAQGFLPEAMLNFLATMGWTHPEGKEIFDLAEFQRVFRLEDVTLGGPVFSLDKLRWMNGKYLREVLSEEEVAERLHAYLASQKHDLPDDDYFRAVVRMMIPRMDVFSEFLEKTPYFWSEDYPVSEKAQHLIEEGRPFLPELAARLKNLPSFDPATTEAALRAFAEERGLKPGKVMQPLRAAIAGTSESPGMFELLEVLGQERVVARVERAARGG.

Residues 9-19 (PSPTGDPHVGT) carry the 'HIGH' region motif. The 'KMSKS' region signature appears at 253–257 (KISKR). Lysine 256 provides a ligand contact to ATP.

Belongs to the class-I aminoacyl-tRNA synthetase family. Glutamate--tRNA ligase type 1 subfamily. Monomer.

The protein resides in the cytoplasm. The catalysed reaction is tRNA(Glu) + L-glutamate + ATP = L-glutamyl-tRNA(Glu) + AMP + diphosphate. Catalyzes the attachment of glutamate to tRNA(Glu) in a two-step reaction: glutamate is first activated by ATP to form Glu-AMP and then transferred to the acceptor end of tRNA(Glu). The protein is Glutamate--tRNA ligase of Deinococcus geothermalis (strain DSM 11300 / CIP 105573 / AG-3a).